A 242-amino-acid chain; its full sequence is Ribosomal RNA large subunit methyltransferase E (242 aa).

The S-adenosyl-L-methionine site is built by glycine 64, tryptophan 66, aspartate 84, aspartate 100, and aspartate 125. The active-site Proton acceptor is the lysine 165. Residues 198 to 242 (SSETFLLGRGLKKASPNGLDSRSGTAAEPAPLVPIGTNSMPANGD) form a disordered region. Positions 233–242 (GTNSMPANGD) are enriched in polar residues.

It belongs to the class I-like SAM-binding methyltransferase superfamily. RNA methyltransferase RlmE family.

It is found in the cytoplasm. It carries out the reaction uridine(2552) in 23S rRNA + S-adenosyl-L-methionine = 2'-O-methyluridine(2552) in 23S rRNA + S-adenosyl-L-homocysteine + H(+). In terms of biological role, specifically methylates the uridine in position 2552 of 23S rRNA at the 2'-O position of the ribose in the fully assembled 50S ribosomal subunit. The sequence is that of Ribosomal RNA large subunit methyltransferase E from Verminephrobacter eiseniae (strain EF01-2).